A 412-amino-acid chain; its full sequence is Esterase EstD (412 aa).

A signal peptide spans 1–20; the sequence is MRLTVFLSLFLGVMVFGAFD. S243 acts as the Nucleophile in catalysis. Active-site charge relay system residues include D347 and H378.

It belongs to the AB hydrolase superfamily. Esterase 10 family. As to quaternary structure, exists mainly as a monomer and, to some extent as a dimer.

It catalyses the reaction a carboxylic ester + H2O = an alcohol + a carboxylate + H(+). Its activity is regulated as follows. Is strongly inhibited by phenylmethylsulfonyl fluoride, a serine protease inhibitor, and by mercury chloride. Diethyl pyrocarbonate, a histidine modifier, also inhibits the reaction, albeit less pronounced than phenylmethylsulfonyl fluoride. EDTA and dithiothreitol have no effect on enzyme activity. In terms of biological role, exhibits significant esterase activity with a preference for short acyl chain esters (C4-C8) in vitro. Its physiological function is not known. Displays neither proteolytic activity using casein as substrate, nor peptidase activity when assayed with L-leucine p-nitroanilide and L-proline p-nitroanilide. The polypeptide is Esterase EstD (Thermotoga maritima (strain ATCC 43589 / DSM 3109 / JCM 10099 / NBRC 100826 / MSB8)).